A 302-amino-acid polypeptide reads, in one-letter code: Large ribosomal subunit protein uL4m (302 aa).

The protein belongs to the universal ribosomal protein uL4 family. In terms of assembly, component of the mitochondrial ribosome large subunit (39S) which comprises a 16S rRNA and about 50 distinct proteins.

Its subcellular location is the mitochondrion. The sequence is that of Large ribosomal subunit protein uL4m (mrpl4) from Danio rerio (Zebrafish).